The primary structure comprises 2146 residues: Phospholipid-transporting ATPase ABCA7 (2146 aa).

The chain crosses the membrane as a helical span at residues 22 to 42 (PVQLLVELLWPLFLFFILVAV). Residues 43-549 (RHSHPPLEHH…DVFLRVLSRS (507 aa)) lie on the Extracellular side of the membrane. The cysteines at positions 75 and 225 are disulfide-linked. Asn-312 is a glycosylation site (N-linked (GlcNAc...) asparagine). 6 helical membrane passes run 550–570 (LPLF…KAVV), 593–613 (LGWF…LVLV), 626–646 (GVVF…SFLL), 655–675 (LAAA…VLCV), 687–707 (VAAS…LALL), and 727–747 (VFSL…YGLA). The 232-residue stretch at 807–1038 (VSVRSLEKRF…LGSGYYLTLV (232 aa)) folds into the ABC transporter 1 domain. 841 to 848 (GHNGAGKT) serves as a coordination point for ATP. The chain crosses the membrane as a helical span at residues 849 to 869 (TTLSILSGLFPPSGGSAFILG). A compositionally biased stretch (basic and acidic residues) spans 1048–1066 (EKADTDMEGSVDTRQEKKN). 2 disordered regions span residues 1048–1072 (EKAD…QGSR) and 1185–1209 (TALE…DAVG). A helical transmembrane segment spans residues 1243–1263 (IVLPALFVGLALVFSLIVPPF). Topologically, residues 1264–1537 (GHYPALRLSP…ALMASSVDVL (274 aa)) are extracellular. The cysteines at positions 1345 and 1359 are disulfide-linked. The next 6 membrane-spanning stretches (helical) occupy residues 1538–1558 (VSIC…LVLI), 1584–1604 (FLWD…IFLA), 1621–1641 (LLLL…SFFF), 1649–1669 (VVLT…TFVL), 1683–1703 (ILKQ…LIDM), and 1729–1749 (VVGK…LFTL). The ABC transporter 2 domain occupies 1793–2025 (LVLRNLTKVY…FAAGHTLTLR (233 aa)). 1827 to 1834 (GVNGAGKT) provides a ligand contact to ATP. The disordered stretch occupies residues 2104–2146 (QGKDEDTEEQKEAGVGVDPAPGLQHPKRVSQFLDDPSTAETVL).

This sequence belongs to the ABC transporter superfamily. ABCA family. In terms of processing, N-glycosylated. Expressed in leukocytes (at protein level). Widely expressed. Highly expressed in myelo-lymphatic tissues including peripheral leukocytes, thymus, spleen and bone marrow. Expressed in the hippocampus and the cerebellum. Isoform 2: Abundant in lymph node, spleen, thymus and trachea. Isoform 1: Strongly expressed in brain and bone marrow.

Its subcellular location is the cell membrane. The protein localises to the golgi apparatus membrane. It localises to the early endosome membrane. It is found in the cytoplasm. The protein resides in the cell projection. Its subcellular location is the ruffle membrane. The protein localises to the phagocytic cup. It localises to the endoplasmic reticulum. The enzyme catalyses ATP + H2O + phospholipidSide 1 = ADP + phosphate + phospholipidSide 2.. It catalyses the reaction a 1,2-diacyl-sn-glycero-3-phosphocholine(out) + ATP + H2O = a 1,2-diacyl-sn-glycero-3-phosphocholine(in) + ADP + phosphate + H(+). It carries out the reaction a 1,2-diacyl-sn-glycero-3-phospho-L-serine(out) + ATP + H2O = a 1,2-diacyl-sn-glycero-3-phospho-L-serine(in) + ADP + phosphate + H(+). ATPase activity is decreased by cholesterol and ceramide. ATPase activity is stimulated by phosphatidylserine, phosphatidylcholine and sphingomyelin, but phosphatidylserine is more effective. In terms of biological role, catalyzes the translocation of specific phospholipids from the cytoplasmic to the extracellular/lumenal leaflet of membrane coupled to the hydrolysis of ATP. Transports preferentially phosphatidylserine over phosphatidylcholine. Plays a role in lipid homeostasis and macrophage-mediated phagocytosis. Binds APOA1 and may function in apolipoprotein-mediated phospholipid efflux from cells. May also mediate cholesterol efflux. May regulate cellular ceramide homeostasis during keratinocyte differentiation. Involved in lipid raft organization and CD1D localization on thymocytes and antigen-presenting cells, which plays an important role in natural killer T-cell development and activation. Plays a role in phagocytosis of apoptotic cells by macrophages. Macrophage phagocytosis is stimulated by APOA1 or APOA2, probably by stabilization of ABCA7. Also involved in phagocytic clearance of amyloid-beta by microglia cells and macrophages. Further limits amyloid-beta production by playing a role in the regulation of amyloid-beta A4 precursor protein (APP) endocytosis and/or processing. Amyloid-beta is the main component of amyloid plaques found in the brains of Alzheimer patients. The protein is Phospholipid-transporting ATPase ABCA7 of Homo sapiens (Human).